The chain runs to 271 residues: Type III pantothenate kinase (271 aa).

6–13 (DVRNTHTV) lines the ATP pocket. 109-112 (GADR) lines the substrate pocket. Asp111 acts as the Proton acceptor in catalysis. Position 131 (Asp131) interacts with K(+). Ser134 contributes to the ATP binding site. Thr186 contacts substrate.

This sequence belongs to the type III pantothenate kinase family. Homodimer. NH4(+) is required as a cofactor. Requires K(+) as cofactor.

It localises to the cytoplasm. It catalyses the reaction (R)-pantothenate + ATP = (R)-4'-phosphopantothenate + ADP + H(+). The protein operates within cofactor biosynthesis; coenzyme A biosynthesis; CoA from (R)-pantothenate: step 1/5. Catalyzes the phosphorylation of pantothenate (Pan), the first step in CoA biosynthesis. The polypeptide is Type III pantothenate kinase (Mycolicibacterium vanbaalenii (strain DSM 7251 / JCM 13017 / BCRC 16820 / KCTC 9966 / NRRL B-24157 / PYR-1) (Mycobacterium vanbaalenii)).